We begin with the raw amino-acid sequence, 119 residues long: Large ribosomal subunit protein bL20 (119 aa).

Belongs to the bacterial ribosomal protein bL20 family.

Functionally, binds directly to 23S ribosomal RNA and is necessary for the in vitro assembly process of the 50S ribosomal subunit. It is not involved in the protein synthesizing functions of that subunit. This Thermoanaerobacter sp. (strain X514) protein is Large ribosomal subunit protein bL20.